We begin with the raw amino-acid sequence, 95 residues long: MTMKTLCLSLIVIGVLILVAVKAEDYVNINSLEEAPEENVNINNLEETPEESRCIQRHRSCRKSSECCGCSVCQCNLFGQNCQCKSGGLIACGKK.

The signal sequence occupies residues 1–23; sequence MTMKTLCLSLIVIGVLILVAVKA. Residues 24–53 constitute a propeptide that is removed on maturation; the sequence is EDYVNINSLEEAPEENVNINNLEETPEESR. Disulfide bonds link Cys54-Cys68, Cys61-Cys73, Cys67-Cys84, Cys70-Cys92, and Cys75-Cys82. Cys92 bears the Cysteine amide mark.

This sequence belongs to the neurotoxin 02 (plectoxin) family. 02 (plectoxin) subfamily. Expressed by the venom gland.

The protein localises to the secreted. In terms of biological role, this recombinant (non-amidated) toxin shows insecticidal activity on larvae of the housefly Musca domestica and has no activity on a panel of expressed neuronal receptors and ion channels. This chain is Toxin Tbo-IT2, found in Tibellus oblongus (Oblong running crab spider).